Consider the following 188-residue polypeptide: Elongation factor P (188 aa).

This sequence belongs to the elongation factor P family.

The protein localises to the cytoplasm. It functions in the pathway protein biosynthesis; polypeptide chain elongation. Involved in peptide bond synthesis. Stimulates efficient translation and peptide-bond synthesis on native or reconstituted 70S ribosomes in vitro. Probably functions indirectly by altering the affinity of the ribosome for aminoacyl-tRNA, thus increasing their reactivity as acceptors for peptidyl transferase. The protein is Elongation factor P of Aeromonas hydrophila subsp. hydrophila (strain ATCC 7966 / DSM 30187 / BCRC 13018 / CCUG 14551 / JCM 1027 / KCTC 2358 / NCIMB 9240 / NCTC 8049).